A 199-amino-acid polypeptide reads, in one-letter code: dITP/XTP pyrophosphatase (199 aa).

8–13 (SGNAGK) lines the substrate pocket. The active-site Proton acceptor is D69. D69 provides a ligand contact to Mg(2+). Residues S70, 154–157 (FGYN), K177, and 182–183 (HR) contribute to the substrate site.

This sequence belongs to the HAM1 NTPase family. Homodimer. Requires Mg(2+) as cofactor.

The enzyme catalyses XTP + H2O = XMP + diphosphate + H(+). The catalysed reaction is dITP + H2O = dIMP + diphosphate + H(+). It carries out the reaction ITP + H2O = IMP + diphosphate + H(+). Its function is as follows. Pyrophosphatase that catalyzes the hydrolysis of nucleoside triphosphates to their monophosphate derivatives, with a high preference for the non-canonical purine nucleotides XTP (xanthosine triphosphate), dITP (deoxyinosine triphosphate) and ITP. Seems to function as a house-cleaning enzyme that removes non-canonical purine nucleotides from the nucleotide pool, thus preventing their incorporation into DNA/RNA and avoiding chromosomal lesions. The protein is dITP/XTP pyrophosphatase of Xylella fastidiosa (strain Temecula1 / ATCC 700964).